The sequence spans 759 residues: Subtilisin-like serine-protease S (759 aa).

An N-terminal signal peptide occupies residues 1–22 (MGSAKILSFTLLLFVGYTLVHG). One can recognise an Inhibitor I9 domain in the interval 28–105 (YIVYMGDRSH…SVFESKMNKL (78 aa)). One can recognise a Peptidase S8 domain in the interval 110 to 613 (SWDFLGLDTV…SGHVNPVASL (504 aa)). Catalysis depends on aspartate 139, which acts as the Charge relay system. N-linked (GlcNAc...) asparagine glycosylation is present at asparagine 170. Histidine 215 (charge relay system) is an active-site residue. N-linked (GlcNAc...) asparagine glycans are attached at residues asparagine 230 and asparagine 388. Residues 390–462 (SFCKEHTLDP…MIGQDAVEEL (73 aa)) form the PA domain. Serine 545 functions as the Charge relay system in the catalytic mechanism. N-linked (GlcNAc...) asparagine glycans are attached at residues asparagine 593, asparagine 642, and asparagine 671.

The protein belongs to the peptidase S8 family.

Its subcellular location is the secreted. It localises to the extracellular space. It is found in the apoplast. Required for arbuscular mycorrhiza (AM) development during AM symbiosis with AM fungi (e.g. Glomeromycota intraradices). In Lotus japonicus (Lotus corniculatus var. japonicus), this protein is Subtilisin-like serine-protease S.